We begin with the raw amino-acid sequence, 174 residues long: Peptide deformylase (174 aa).

2 residues coordinate Fe cation: Cys-96 and His-138. Residue Glu-139 is part of the active site. His-142 provides a ligand contact to Fe cation.

It belongs to the polypeptide deformylase family. Fe(2+) serves as cofactor.

The catalysed reaction is N-terminal N-formyl-L-methionyl-[peptide] + H2O = N-terminal L-methionyl-[peptide] + formate. In terms of biological role, removes the formyl group from the N-terminal Met of newly synthesized proteins. Requires at least a dipeptide for an efficient rate of reaction. N-terminal L-methionine is a prerequisite for activity but the enzyme has broad specificity at other positions. The polypeptide is Peptide deformylase (Helicobacter pylori (strain HPAG1)).